We begin with the raw amino-acid sequence, 160 residues long: Transcription elongation factor GreA (160 aa).

Residues 4-70 are a coiled coil; the sequence is QKQYPMTQEG…IEQDIQRIEH (67 aa).

The protein belongs to the GreA/GreB family.

Its function is as follows. Necessary for efficient RNA polymerase transcription elongation past template-encoded arresting sites. The arresting sites in DNA have the property of trapping a certain fraction of elongating RNA polymerases that pass through, resulting in locked ternary complexes. Cleavage of the nascent transcript by cleavage factors such as GreA or GreB allows the resumption of elongation from the new 3'terminus. GreA releases sequences of 2 to 3 nucleotides. This Staphylococcus carnosus (strain TM300) protein is Transcription elongation factor GreA.